Consider the following 467-residue polypeptide: Serine/threonine-protein kinase US3 homolog (467 aa).

A disordered region spans residues 64–155 (GPEVAPPART…PAGGVTREEA (92 aa)). Over residues 99–111 (NERRAATGDEKES) the composition is skewed to basic and acidic residues. Over residues 117–144 (NESESESESESESESGADDGDWDDDDDA) the composition is skewed to acidic residues. A Protein kinase domain is found at 164–462 (FRIIRRLTPG…AAELLEHPVF (299 aa)). ATP is bound by residues 170-178 (LTPGSEGRV) and lysine 194. Aspartate 279 serves as the catalytic Proton acceptor.

Belongs to the protein kinase superfamily. Ser/Thr protein kinase family. Post-translationally, phosphorylated by UL13 homolog; this phosphorylation regulates subsequent phosphorylation of UL31 and UL34 homologs by US3. Autophosphorylated.

It is found in the host cytoplasm. The protein resides in the host nucleus. It carries out the reaction L-seryl-[protein] + ATP = O-phospho-L-seryl-[protein] + ADP + H(+). It catalyses the reaction L-threonyl-[protein] + ATP = O-phospho-L-threonyl-[protein] + ADP + H(+). In terms of biological role, multifunctional serine/threonine kinase that plays a role in several processes including egress of virus particles from the nucleus, modulation of the actin cytoskeleton and inhibition of apoptosis. Phosphorylates UL31 and UL34 homologs, two critical regulators of capsid budding from nucleus to endoplasmic reticulum, thereby facilitating virion egress. Modulates and redistributes host components of the nuclear envelope, including LMNA, emerin/EMD and the nuclear matrix protein MATR3. Phosphorylates envelope glycoprotein B (gB), probably to direct it to the cell surface. Promotes virus intracellular spread by restructuring host cell cytoskeleton. Blocks host apoptosis to extend cell survival and allow efficient viral replication. Promotes viral gene expression by phosphorylating host HDAC2 to reduce viral genome silencing. This Bos taurus (Bovine) protein is Serine/threonine-protein kinase US3 homolog.